Consider the following 495-residue polypeptide: Cysteine--tRNA ligase (495 aa).

Zn(2+) is bound at residue cysteine 29. The 'HIGH' region signature appears at 31–41 (PTVYDYGHIGN). Residues cysteine 211, histidine 236, and glutamate 240 each coordinate Zn(2+). The 'KMSKS' region signature appears at 268–272 (KMSKS). Lysine 271 contributes to the ATP binding site.

The protein belongs to the class-I aminoacyl-tRNA synthetase family. In terms of assembly, monomer. Zn(2+) serves as cofactor.

The protein resides in the cytoplasm. It catalyses the reaction tRNA(Cys) + L-cysteine + ATP = L-cysteinyl-tRNA(Cys) + AMP + diphosphate. This Koribacter versatilis (strain Ellin345) protein is Cysteine--tRNA ligase.